The chain runs to 282 residues: 2-dehydro-3-deoxyphosphooctonate aldolase (282 aa).

It belongs to the KdsA family.

The protein localises to the cytoplasm. The catalysed reaction is D-arabinose 5-phosphate + phosphoenolpyruvate + H2O = 3-deoxy-alpha-D-manno-2-octulosonate-8-phosphate + phosphate. It functions in the pathway carbohydrate biosynthesis; 3-deoxy-D-manno-octulosonate biosynthesis; 3-deoxy-D-manno-octulosonate from D-ribulose 5-phosphate: step 2/3. Its pathway is bacterial outer membrane biogenesis; lipopolysaccharide biosynthesis. The chain is 2-dehydro-3-deoxyphosphooctonate aldolase from Chromobacterium violaceum (strain ATCC 12472 / DSM 30191 / JCM 1249 / CCUG 213 / NBRC 12614 / NCIMB 9131 / NCTC 9757 / MK).